The chain runs to 45 residues: Myotoxin-2 (45 aa).

Intrachain disulfides connect Cys4–Cys36, Cys11–Cys30, and Cys18–Cys37.

The protein belongs to the crotamine-myotoxin family. In terms of assembly, monomer. In terms of tissue distribution, expressed by the venom gland.

Its subcellular location is the secreted. Cationic peptide that possesses multiple functions. It acts as a cell-penetrating peptide (CPP), and as a potent voltage-gated potassium channel (Kv) inhibitor. It exhibits antimicrobial activities, hind limb paralysis, and severe muscle necrosis by a non-enzymatic mechanism. This is Myotoxin-2 from Crotalus viridis viridis (Prairie rattlesnake).